Reading from the N-terminus, the 334-residue chain is Dihydroorotate dehydrogenase (quinone) (334 aa).

FMN-binding positions include Ala59–Lys63 and Thr83. Residue Lys63 participates in substrate binding. Asn108–Phe112 contributes to the substrate binding site. Residues Asn136 and Asn169 each contribute to the FMN site. Substrate is bound at residue Asn169. Ser172 acts as the Nucleophile in catalysis. Residue Asn174 coordinates substrate. FMN is bound by residues Lys214 and Thr242. Asn243–Thr244 is a substrate binding site. Residues Gly265, Gly294, and Tyr315 to Ser316 each bind FMN.

The protein belongs to the dihydroorotate dehydrogenase family. Type 2 subfamily. In terms of assembly, monomer. FMN serves as cofactor.

Its subcellular location is the cell membrane. The catalysed reaction is (S)-dihydroorotate + a quinone = orotate + a quinol. Its pathway is pyrimidine metabolism; UMP biosynthesis via de novo pathway; orotate from (S)-dihydroorotate (quinone route): step 1/1. In terms of biological role, catalyzes the conversion of dihydroorotate to orotate with quinone as electron acceptor. The polypeptide is Dihydroorotate dehydrogenase (quinone) (Acinetobacter baumannii (strain AB0057)).